The sequence spans 634 residues: Heat shock 70-related protein 1, mitochondrial (634 aa).

The N-terminal 20 residues, 1-20 (MFARRVCGSAAASAACLARH), are a transit peptide targeting the mitochondrion. Residues 538-614 (SEQHAEADRV…AAATDKLQKA (77 aa)) adopt a coiled-coil conformation.

It belongs to the heat shock protein 70 family.

It localises to the mitochondrion. The protein is Heat shock 70-related protein 1, mitochondrial (HSP70.1) of Leishmania major.